A 373-amino-acid polypeptide reads, in one-letter code: Dual-specificity RNA methyltransferase RlmN (373 aa).

Residue Glu-94 is the Proton acceptor of the active site. In terms of domain architecture, Radical SAM core spans 100-339 (EDDRATLCVS…VIVRKTRGDD (240 aa)). Cys-107 and Cys-344 form a disulfide bridge. [4Fe-4S] cluster is bound by residues Cys-114, Cys-118, and Cys-121. Residues 168–169 (GE), Ser-200, 222–224 (SIH), and Asn-301 each bind S-adenosyl-L-methionine. The active-site S-methylcysteine intermediate is Cys-344.

The protein belongs to the radical SAM superfamily. RlmN family. Requires [4Fe-4S] cluster as cofactor.

Its subcellular location is the cytoplasm. It catalyses the reaction adenosine(2503) in 23S rRNA + 2 reduced [2Fe-2S]-[ferredoxin] + 2 S-adenosyl-L-methionine = 2-methyladenosine(2503) in 23S rRNA + 5'-deoxyadenosine + L-methionine + 2 oxidized [2Fe-2S]-[ferredoxin] + S-adenosyl-L-homocysteine. The catalysed reaction is adenosine(37) in tRNA + 2 reduced [2Fe-2S]-[ferredoxin] + 2 S-adenosyl-L-methionine = 2-methyladenosine(37) in tRNA + 5'-deoxyadenosine + L-methionine + 2 oxidized [2Fe-2S]-[ferredoxin] + S-adenosyl-L-homocysteine. In terms of biological role, specifically methylates position 2 of adenine 2503 in 23S rRNA and position 2 of adenine 37 in tRNAs. m2A2503 modification seems to play a crucial role in the proofreading step occurring at the peptidyl transferase center and thus would serve to optimize ribosomal fidelity. This is Dual-specificity RNA methyltransferase RlmN from Shewanella baltica (strain OS155 / ATCC BAA-1091).